The following is a 274-amino-acid chain: Large ribosomal subunit protein uL2cz/uL2cy (274 aa).

Disordered regions lie at residues 1–26 (MAIH…KSNP) and 223–274 (MNPV…RRSK).

The protein belongs to the universal ribosomal protein uL2 family. In terms of assembly, part of the 50S ribosomal subunit.

Its subcellular location is the plastid. The protein resides in the chloroplast. This Daucus carota (Wild carrot) protein is Large ribosomal subunit protein uL2cz/uL2cy (rpl2-A).